Reading from the N-terminus, the 227-residue chain is GRF-interacting factor 1 (227 aa).

The interval 186–227 is disordered; the sequence is RSGSGAKEGSTSLSVDVRGGTSSGAQSGDGEYLKVGTEEEGS.

Belongs to the SS18 family. In terms of assembly, interacts with several GRFs. Interacts with GRF10. Interacts with GRF1. Expressed in shoots, aerial roots, ears and tassels. Expressed in the shoot apical meristem (SAM), young leaf primordia, leaf margins, inflorescence meristem, floral meristem and spikelet meristem.

Its function is as follows. Transcription coactivator that plays a role in the regulation of meristematic function in leaves, stems and inflorescences. Regulates shoot architecture and meristem determinacy. Binds to the inflorescence architecture gene UB3 (unbranched3). Regulates the expression of several genes involved in inflorescence architecture. Component of a network formed by the microRNA396 (miRNA396), the GRFs and their interacting factors (GIFs) acting in the regulation of meristem function, at least partially through the control of cell proliferation. Associates with the core SWI/SNF chromatin-remodeling complex and specific GRFs to tightly regulate the transition between cell division and cell expansion in growing leaves. This Zea mays (Maize) protein is GRF-interacting factor 1.